Reading from the N-terminus, the 685-residue chain is Sodium-dependent phosphate transporter 1-B (685 aa).

A run of 6 helical transmembrane segments spans residues isoleucine 21–phenylalanine 41, alanine 66–serine 86, leucine 106–phenylalanine 126, isoleucine 162–phenylalanine 182, alanine 207–phenylalanine 227, and glycine 234–valine 254. Residues glutamate 489–aspartate 511 form a disordered region. Basic and acidic residues predominate over residues valine 496 to aspartate 511. 4 helical membrane passes run valine 517–glycine 537, alanine 565–tryptophan 585, phenylalanine 606–isoleucine 626, and isoleucine 656–alanine 676.

It belongs to the inorganic phosphate transporter (PiT) (TC 2.A.20) family.

It localises to the membrane. Its function is as follows. Sodium-phosphate symporter which plays a fundamental housekeeping role in phosphate transport. The protein is Sodium-dependent phosphate transporter 1-B (slc20a1-b) of Xenopus laevis (African clawed frog).